A 429-amino-acid polypeptide reads, in one-letter code: Glutamate-1-semialdehyde 2,1-aminomutase (429 aa).

Residue lysine 267 is modified to N6-(pyridoxal phosphate)lysine.

This sequence belongs to the class-III pyridoxal-phosphate-dependent aminotransferase family. HemL subfamily. Homodimer. The cofactor is pyridoxal 5'-phosphate.

It localises to the cytoplasm. The catalysed reaction is (S)-4-amino-5-oxopentanoate = 5-aminolevulinate. Its pathway is porphyrin-containing compound metabolism; protoporphyrin-IX biosynthesis; 5-aminolevulinate from L-glutamyl-tRNA(Glu): step 2/2. The chain is Glutamate-1-semialdehyde 2,1-aminomutase from Herpetosiphon aurantiacus (strain ATCC 23779 / DSM 785 / 114-95).